A 161-amino-acid polypeptide reads, in one-letter code: MRLKDAIPKKGSQQRGRRVGRGISAGQGASCGKGMRGQKSRSGGSTRPGFEGGQNPLYRRLPKLKGFPMVNRKKYTIINVSKLSSLPANTEVTLASLIKVGIITTDDGPLKILGDGDLNIPLKVYAAAFTASARSKIEAAGGSCEEIGPAQAVSNEDSTKE.

The tract at residues 1–57 is disordered; that stretch reads MRLKDAIPKKGSQQRGRRVGRGISAGQGASCGKGMRGQKSRSGGSTRPGFEGGQNPL. Residues 23–35 show a composition bias toward gly residues; it reads ISAGQGASCGKGM.

The protein belongs to the universal ribosomal protein uL15 family. As to quaternary structure, part of the 50S ribosomal subunit.

Its function is as follows. Binds to the 23S rRNA. The protein is Large ribosomal subunit protein uL15 of Trichodesmium erythraeum (strain IMS101).